The following is a 180-amino-acid chain: Prorelaxin (180 aa).

Positions 1–25 (MLRLFLSHLLGVWLLLSLRARKIPA) are cleaved as a signal peptide. 3 disulfide bridges follow: cysteine 33–cysteine 167, cysteine 45–cysteine 180, and cysteine 166–cysteine 171. Positions 53–154 (SSQQHREPRQ…RSRLDAHSRI (102 aa)) are cleaved as a propeptide — connecting peptide.

This sequence belongs to the insulin family. Heterodimer of a B chain and an A chain linked by two disulfide bonds. As to expression, expressed by the placenta. Exclusively detected in cells located in the lamellar placental labyrinth and absent from other placental and non-placental uterine parts.

It is found in the secreted. Functionally, relaxin is an ovarian hormone that acts with estrogen to produce dilatation of the birth canal in many mammals. The polypeptide is Prorelaxin (RLN) (Felis catus (Cat)).